The chain runs to 482 residues: MFS-type transporter traF (482 aa).

Residues 1–14 (MTSGTEQATLNTEE) show a composition bias toward polar residues. The segment at 1-22 (MTSGTEQATLNTEENGSDSDHL) is disordered. N-linked (GlcNAc...) asparagine glycosylation is found at Asn15 and Asn45. Transmembrane regions (helical) follow at residues 52–72 (VFIT…SSVM), 89–109 (LSIL…LLFG), 125–145 (VFLF…ATIF), 149–169 (FLCG…LADL), 176–196 (GIAV…GPLV), 209–229 (WTQW…FVFC), 275–295 (PILA…YLCF), 312–332 (IGSL…VIII), and 354–374 (LVPM…FAWT). Asn376 carries an N-linked (GlcNAc...) asparagine glycan. A run of 3 helical transmembrane segments spans residues 379 to 399 (LPWA…LLIF), 427 to 447 (LLGA…GVPW), and 448 to 468 (AMSL…LFFI).

It belongs to the major facilitator superfamily. CAR1 family.

It localises to the membrane. MFS-type transporter; part of the tra gene cluster that produces terrestric acid. The clavatol biosynthesis cluster cla and the terrestric acid cluster tra are both involved in the production of peniphenones and penilactones. The chain is MFS-type transporter traF from Penicillium crustosum (Blue mold fungus).